Reading from the N-terminus, the 555-residue chain is CCR4-NOT transcription complex subunit 6-like (555 aa).

The interval 1-152 (MRLIGMPKEK…SLYQDPDGTR (152 aa)) is required for interaction with CNOT1, CNOT3 and CNOT7. LRR repeat units follow at residues 57 to 78 (HLTALHLNDNNLARIPPDIAKL), 80 to 101 (NLVYLDLSSNKLRSLPAELGNM), 103 to 125 (SLRELLLNDNYLRVLPYELGRLF), and 126 to 148 (QLQTLGLTGNPLSQDIMSLYQDP). Residues 158–555 (MLDNLAVHPE…VNGVHLPNRR (398 aa)) form a nuclease domain region. Glu-240 provides a ligand contact to Mg(2+). 4 residues coordinate substrate: Glu-240, Glu-276, His-360, and Pro-365. Asp-410 contacts Mg(2+). Asp-410 (proton donor/acceptor) is an active-site residue. Substrate contacts are provided by Asn-412, Asn-479, and Phe-484.

Belongs to the CCR4/nocturin family. Component of the CCR4-NOT complex; distinct complexes seem to exist that differ in the participation of probably mutually exclusive catalytic subunits; the complex contains two deadenylase subunits, CNOT6 or CNOT6L, and CNOT7 or CNOT8. Interacts with CNOT1, CNOT3, CNOT7, CNOT8 and CNOT9. Interacts with TOB1. Interacts with NANOS2. Interacts with ZFP36. Interacts with ZFP36L2. Interacts with RBM46. Mg(2+) is required as a cofactor.

It localises to the cytoplasm. The protein resides in the nucleus. The catalysed reaction is Exonucleolytic cleavage of poly(A) to 5'-AMP.. Functionally, poly(A) nuclease with 3'-5' RNase activity. Catalytic component of the CCR4-NOT complex which is one of the major cellular mRNA deadenylases and is linked to various cellular processes including bulk mRNA degradation, miRNA-mediated repression, translational repression during translational initiation and general transcription regulation. Additional complex functions may be a consequence of its influence on mRNA expression. Involved in mRNA decay mediated by the major-protein-coding determinant of instability (mCRD) of the FOS gene in the cytoplasm. Involved in deadenylation-dependent degradation of CDKN1B mRNA. Its mRNA deadenylase activity can be inhibited by TOB1. Mediates cell proliferation and cell survival and prevents cellular senescence. This chain is CCR4-NOT transcription complex subunit 6-like (Cnot6l), found in Mus musculus (Mouse).